Consider the following 485-residue polypeptide: Leukocyte receptor cluster member 9 (485 aa).

Residues 8 to 35 (SEAPAVCRFFLEGRCRFGARCRQPHPGA) form a C3H1-type zinc finger. The interval 212 to 247 (ETRTGLDSSLETPEVDGPTKETGLNGTTELEMPDPS) is disordered.

In Mus musculus (Mouse), this protein is Leukocyte receptor cluster member 9 (Leng9).